The primary structure comprises 879 residues: Beta-mannosidase (879 aa).

A signal peptide spans 1 to 19 (MHLHLLLILALFRAGCVVA). 4 N-linked (GlcNAc...) asparagine glycosylation sites follow: Asn-35, Asn-77, Asn-89, and Asn-113. A disulfide bridge connects residues Cys-167 and Cys-176. 190–192 (WDW) contacts substrate. N-linked (GlcNAc...) asparagine glycosylation is found at Asn-226, Asn-297, and Asn-302. Asn-456 contributes to the substrate binding site. Glu-457 acts as the Proton donor in catalysis. 3 disulfides stabilise this stretch: Cys-540-Cys-629, Cys-732-Cys-761, and Cys-764-Cys-769. Glu-554 serves as the catalytic Nucleophile. The N-linked (GlcNAc...) asparagine glycan is linked to Asn-736. N-linked (GlcNAc...) asparagine glycosylation is found at Asn-803 and Asn-807.

Belongs to the glycosyl hydrolase 2 family. Monomer. In terms of tissue distribution, highest level in liver, high levels in lung, testis, skin and spleen, moderate level in thymus. Activity found in plasma, kidney, liver, spleen, pancreas, brain, testis, epididymis, heart, lung and skeletal muscle.

The protein localises to the lysosome. The enzyme catalyses Hydrolysis of terminal, non-reducing beta-D-mannose residues in beta-D-mannosides.. Its pathway is glycan metabolism; N-glycan degradation. Exoglycosidase that cleaves the single beta-linked mannose residue from the non-reducing end of all N-linked glycoprotein oligosaccharides. This chain is Beta-mannosidase, found in Mus musculus (Mouse).